The primary structure comprises 295 residues: Glycine--tRNA ligase alpha subunit (295 aa).

This sequence belongs to the class-II aminoacyl-tRNA synthetase family. In terms of assembly, tetramer of two alpha and two beta subunits.

The protein resides in the cytoplasm. The catalysed reaction is tRNA(Gly) + glycine + ATP = glycyl-tRNA(Gly) + AMP + diphosphate. The polypeptide is Glycine--tRNA ligase alpha subunit (Prochlorococcus marinus (strain MIT 9215)).